The following is a 338-amino-acid chain: RNA 3'-terminal phosphate cyclase (338 aa).

Residues glutamine 103 and 283–287 (YLADQ) each bind ATP. The Tele-AMP-histidine intermediate role is filled by histidine 308.

Belongs to the RNA 3'-terminal cyclase family. Type 1 subfamily.

It is found in the cytoplasm. The enzyme catalyses a 3'-end 3'-phospho-ribonucleotide-RNA + ATP = a 3'-end 2',3'-cyclophospho-ribonucleotide-RNA + AMP + diphosphate. In terms of biological role, catalyzes the conversion of 3'-phosphate to a 2',3'-cyclic phosphodiester at the end of RNA. The mechanism of action of the enzyme occurs in 3 steps: (A) adenylation of the enzyme by ATP; (B) transfer of adenylate to an RNA-N3'P to produce RNA-N3'PP5'A; (C) and attack of the adjacent 2'-hydroxyl on the 3'-phosphorus in the diester linkage to produce the cyclic end product. The biological role of this enzyme is unknown but it is likely to function in some aspects of cellular RNA processing. The protein is RNA 3'-terminal phosphate cyclase of Escherichia coli O6:H1 (strain CFT073 / ATCC 700928 / UPEC).